A 78-amino-acid chain; its full sequence is Large ribosomal subunit protein bL28 (78 aa).

This sequence belongs to the bacterial ribosomal protein bL28 family.

The protein is Large ribosomal subunit protein bL28 of Aromatoleum aromaticum (strain DSM 19018 / LMG 30748 / EbN1) (Azoarcus sp. (strain EbN1)).